The primary structure comprises 211 residues: FMN-dependent NADH:quinone oxidoreductase 2 (211 aa).

Residues Ser-10 and 17 to 19 each bind FMN; that span reads SRS.

The protein belongs to the azoreductase type 1 family. In terms of assembly, homodimer. FMN serves as cofactor.

It carries out the reaction 2 a quinone + NADH + H(+) = 2 a 1,4-benzosemiquinone + NAD(+). The catalysed reaction is N,N-dimethyl-1,4-phenylenediamine + anthranilate + 2 NAD(+) = 2-(4-dimethylaminophenyl)diazenylbenzoate + 2 NADH + 2 H(+). Its function is as follows. Quinone reductase that provides resistance to thiol-specific stress caused by electrophilic quinones. Functionally, also exhibits azoreductase activity. Catalyzes the reductive cleavage of the azo bond in aromatic azo compounds to the corresponding amines. This Listeria monocytogenes serotype 4b (strain F2365) protein is FMN-dependent NADH:quinone oxidoreductase 2.